Here is a 243-residue protein sequence, read N- to C-terminus: Pyridoxine 5'-phosphate synthase (243 aa).

3-amino-2-oxopropyl phosphate is bound at residue N9. 11-12 (DH) serves as a coordination point for 1-deoxy-D-xylulose 5-phosphate. R20 serves as a coordination point for 3-amino-2-oxopropyl phosphate. H45 serves as the catalytic Proton acceptor. 1-deoxy-D-xylulose 5-phosphate contacts are provided by R47 and H52. E72 (proton acceptor) is an active-site residue. A 1-deoxy-D-xylulose 5-phosphate-binding site is contributed by T102. Residue H193 is the Proton donor of the active site. 3-amino-2-oxopropyl phosphate is bound by residues G194 and 215-216 (GH).

The protein belongs to the PNP synthase family. In terms of assembly, homooctamer; tetramer of dimers.

Its subcellular location is the cytoplasm. The enzyme catalyses 3-amino-2-oxopropyl phosphate + 1-deoxy-D-xylulose 5-phosphate = pyridoxine 5'-phosphate + phosphate + 2 H2O + H(+). It participates in cofactor biosynthesis; pyridoxine 5'-phosphate biosynthesis; pyridoxine 5'-phosphate from D-erythrose 4-phosphate: step 5/5. Its function is as follows. Catalyzes the complicated ring closure reaction between the two acyclic compounds 1-deoxy-D-xylulose-5-phosphate (DXP) and 3-amino-2-oxopropyl phosphate (1-amino-acetone-3-phosphate or AAP) to form pyridoxine 5'-phosphate (PNP) and inorganic phosphate. This chain is Pyridoxine 5'-phosphate synthase, found in Pseudoalteromonas translucida (strain TAC 125).